Consider the following 128-residue polypeptide: Histone H2A.2 (128 aa).

The protein belongs to the histone H2A family. As to quaternary structure, the nucleosome is a histone octamer containing two molecules each of H2A, H2B, H3 and H4 assembled in one H3-H4 heterotetramer and two H2A-H2B heterodimers. The octamer wraps approximately 147 bp of DNA. In terms of tissue distribution, expressed in the generative cell within the bicellular pollen. Not detected in other reproductive or vegetative tissues.

Its subcellular location is the nucleus. The protein resides in the chromosome. Its function is as follows. Core component of nucleosome. Nucleosomes wrap and compact DNA into chromatin, limiting DNA accessibility to the cellular machineries which require DNA as a template. Histones thereby play a central role in transcription regulation, DNA repair, DNA replication and chromosomal stability. DNA accessibility is regulated via a complex set of post-translational modifications of histones, also called histone code, and nucleosome remodeling. May be involved in the repression of gene expression in male gametes. This is Histone H2A.2 (gH2A) from Lilium longiflorum (Trumpet lily).